The chain runs to 880 residues: Potassium/sodium hyperpolarization-activated cyclic nucleotide-gated channel 1 (880 aa).

Residues 1–80 (MEGGGKPNSS…SAGGLEDAEG (80 aa)) are disordered. Residues 1-136 (MEGGGKPNSS…WIIHSYSDFR (136 aa)) are Cytoplasmic-facing. Residues 8–34 (NSSSNSRDDGNSVFPAKAPATGAGPAA) are compositionally biased toward low complexity. Gly residues predominate over residues 62 to 71 (DGGGGGGEES). A helical transmembrane segment spans residues 137-158 (FYWDLIMLIMMVGNLVIIPVGI). At 159 to 167 (TFFTEQTTT) the chain is on the extracellular side. A helical transmembrane segment spans residues 168-188 (PWIIFNVASDTVFLLDLIMNF). Topologically, residues 189–209 (RTGTVNEDSSEIILDPKVIKM) are cytoplasmic. A helical transmembrane segment spans residues 210 to 230 (NYLKSWFVVDFISSIPVDYIF). Over 231 to 254 (LIVEKGMDSEVYKTARALRIVRFT) the chain is Extracellular. The chain crosses the membrane as a helical; Voltage-sensor span at residues 255–275 (KILSLLRLLRLSRLIRYIHQW). Residues 276–289 (EEIFHMTYDLASAV) lie on the Cytoplasmic side of the membrane. Residues 290–312 (VRIFNLIGMMLLLCHWDGCLQFL) form a helical membrane-spanning segment. Residues 313-338 (VPLLQDFPPDCWVSLNEMVNDSWGKQ) are Extracellular-facing. Asn-332 carries N-linked (GlcNAc...) asparagine glycosylation. Residues 339-360 (YSYALFKAMSHMLCIGYGAQAP) constitute an intramembrane region (pore-forming). Positions 352–356 (CIGYG) match the Selectivity filter motif. The Extracellular portion of the chain corresponds to 361–365 (VSMSD). Residues 366-386 (LWITMLSMIVGATCYAMFVGH) traverse the membrane as a helical segment. At 387–880 (ATALIQSLDS…AEKPRFASNL (494 aa)) the chain is on the cytoplasmic side. 3',5'-cyclic AMP-binding residues include Gly-533, Glu-534, Cys-536, Arg-543, Thr-544, Arg-584, and Arg-587. The span at 641–664 (LNSTSSTATPTSRMRTQSPPVYTA) shows a compositional bias: polar residues. Disordered regions lie at residues 641–686 (LNST…QPSA), 718–786 (ASQL…LPHE), and 835–880 (MSSG…ASNL). 2 stretches are compositionally biased toward low complexity: residues 665–685 (TSLSHSNLHSPSPSTQTPQPS) and 725–738 (PQQQQQPQAPQTQP). A compositionally biased stretch (polar residues) spans 760–770 (STQALPNTSLT). The span at 844–855 (RGVPPAPPPPAA) shows a compositional bias: pro residues. The span at 870 to 880 (EAEKPRFASNL) shows a compositional bias: basic and acidic residues.

This sequence belongs to the potassium channel HCN family. In terms of assembly, homotetramer. Heterotetramer with HCN2. The potassium channel is composed of a homo- or heterotetrameric complex of pore-forming subunits. Interacts with KCNE2. Interacts with the SH3 domain of CSK. Detected in myocytes in heart sinoatrial node (SAN) and in brain, in particular in the granule cell layer and in Purkinje neuron bodies in the cerebellum.

The protein resides in the cell membrane. It carries out the reaction Na(+)(in) = Na(+)(out). It catalyses the reaction K(+)(in) = K(+)(out). Activated by cAMP. cAMP binding promotes tetramerization and formation of an active channel. Compared to other family members, cAMP has less stimulatory effect on HCN1 because part of the molecules already contain bound cAMP and form homotetramers when cAMP levels are low, this inherent tetramerization in HCN1 results in a weaker response to increased cAMP. Its function is as follows. Hyperpolarization-activated ion channel that are permeable to sodium and potassium ions. Exhibits weak selectivity for potassium over sodium ions. Contributes to the native pacemaker currents in heart (If) and in neurons (Ih). Participates in cerebellar mechanisms of motor learning. May mediate responses to sour stimuli. This Oryctolagus cuniculus (Rabbit) protein is Potassium/sodium hyperpolarization-activated cyclic nucleotide-gated channel 1 (HCN1).